The chain runs to 293 residues: Putative ribose uptake protein RbsU (293 aa).

10 helical membrane-spanning segments follow: residues 5-24, 34-51, 58-80, 95-114, 121-138, 153-170, 177-199, 212-234, 241-263, and 273-292; these read AILIGLGPLLGWGLFPTIAS, IFGATVGTLIFAIVLALF, GGMALVFSLISGAGWAFGQIITF, TTAFQLLGASLWGVFALGNW, IIGFLALLVILIGARMTV, SAVLLLLVGEIGYWIYSA, IGGFKAFLPQAIGMVIVAVIYAL, VSWQQIISGFFFAFAALTYLISA, LATGFVLSQTSVVLATLTGIFFL, and MITIVGLVLILVAASITVFI.

This sequence belongs to the GRP transporter (TC 2.A.7.5) family.

The protein localises to the cell membrane. In terms of biological role, could be involved in the uptake of ribose. In Staphylococcus epidermidis (strain ATCC 12228 / FDA PCI 1200), this protein is Putative ribose uptake protein RbsU (rbsU).